The sequence spans 409 residues: Pleckstrin homology domain-containing family O member 1 (409 aa).

Residues 1 to 20 (MMKKNNSTKRGPQDGNHQCA) form a disordered region. The region spanning 21 to 132 (PPEKVGWVRK…WINALNSAIT (112 aa)) is the PH domain. Residues 133-193 (RAKNRVLDEV…MLTLDLIQEE (61 aa)) form an interaction with capping proteins (CPs) region. The interaction with ATM, CKIP, IFP35 and NMI stretch occupies residues 136 to 308 (NRVLDEVTVE…PHAPGQLSRI (173 aa)). Disordered regions lie at residues 218–304 (LAGS…APGQ), 325–350 (EVQGLGDGKRKAKEPPRSPPDSESEQ), and 390–409 (TPDSHLRQTTQHSQYRKSLM). Phosphoserine is present on residues Ser227 and Ser271. The interval 308–409 (IQDLVARKLE…QHSQYRKSLM (102 aa)) is negative regulator of AP-1 activity. A compositionally biased stretch (basic and acidic residues) spans 331 to 340 (DGKRKAKEPP). Position 342 is a phosphoserine (Ser342). Residues 390-402 (TPDSHLRQTTQHS) show a composition bias toward polar residues.

Heterodimer or homodimer. Interacts with CK2 and actin capping subunits (capping protein CP-alpha and CP-beta). CKIP1 and CK2 together inhibit the activity of actin capping protein at the barbed ends of actin filaments. Interacts with ATM, IFP35, JUN, JUND, NMI and PI3K. Interacts with AKT1, AKT2 and AKT3 (each isozyme of PKB), PtdIns(3,5)P2, PtdIns(4,5)P2 and PtdIns(3,4,5)P2. In terms of processing, C-terminal fragments could be released during apoptosis via caspase-3-dependent cleavage.

The protein localises to the membrane. It localises to the nucleus. The protein resides in the cytoplasm. Functionally, plays a role in the regulation of the actin cytoskeleton through its interactions with actin capping protein (CP). May function to target CK2 to the plasma membrane thereby serving as an adapter to facilitate the phosphorylation of CP by protein kinase 2 (CK2). Appears to target ATM to the plasma membrane. Also implicated in PI3K-regulated muscle differentiation, the regulation of AP-1 activity (plasma membrane bound AP-1 regulator that translocates to the nucleus) and the promotion of apoptosis induced by tumor necrosis factor TNF. When bound to PKB, it inhibits it probably by decreasing PKB level of phosphorylation. This Bos taurus (Bovine) protein is Pleckstrin homology domain-containing family O member 1 (PLEKHO1).